A 511-amino-acid polypeptide reads, in one-letter code: Exodeoxyribonuclease 7 large subunit (511 aa).

It belongs to the XseA family. Heterooligomer composed of large and small subunits.

Its subcellular location is the cytoplasm. The enzyme catalyses Exonucleolytic cleavage in either 5'- to 3'- or 3'- to 5'-direction to yield nucleoside 5'-phosphates.. Its function is as follows. Bidirectionally degrades single-stranded DNA into large acid-insoluble oligonucleotides, which are then degraded further into small acid-soluble oligonucleotides. This is Exodeoxyribonuclease 7 large subunit from Brucella melitensis biotype 1 (strain ATCC 23456 / CCUG 17765 / NCTC 10094 / 16M).